The sequence spans 597 residues: NADH-quinone oxidoreductase subunit C/D (597 aa).

The tract at residues 1–187 is NADH dehydrogenase I subunit C; sequence MIDENKKKNT…ESFFLDEQKE (187 aa). The NADH dehydrogenase I subunit D stretch occupies residues 211–597; that stretch reads DFMFLNLGPN…IDFVMSDVDR (387 aa).

The protein in the N-terminal section; belongs to the complex I 30 kDa subunit family. In the C-terminal section; belongs to the complex I 49 kDa subunit family. As to quaternary structure, NDH-1 is composed of 13 different subunits. Subunits NuoB, CD, E, F, and G constitute the peripheral sector of the complex.

It localises to the cell inner membrane. It carries out the reaction a quinone + NADH + 5 H(+)(in) = a quinol + NAD(+) + 4 H(+)(out). Its function is as follows. NDH-1 shuttles electrons from NADH, via FMN and iron-sulfur (Fe-S) centers, to quinones in the respiratory chain. The immediate electron acceptor for the enzyme in this species is believed to be ubiquinone. Couples the redox reaction to proton translocation (for every two electrons transferred, four hydrogen ions are translocated across the cytoplasmic membrane), and thus conserves the redox energy in a proton gradient. This Buchnera aphidicola subsp. Schizaphis graminum (strain Sg) protein is NADH-quinone oxidoreductase subunit C/D.